A 459-amino-acid chain; its full sequence is MHNIHRRHFLKAAGAVTAGLVTANIALNANASSVAPKPRVGKSVIGLIAPKMELVRVGFIGVGERGFSHVEQFCHLEGVELKAICDTHQAVIDRAVEHIVNQNRPKPAVYTGNDLSYRELLNRDDIDIVIISTPWEWHAPMAIDTMESGKHAFVEVPLALTVEECWQLVDTAERTQKNCMMMENVNYGREELMVLNMVRQGVFGELLHGEAAYIHELRWQMKEIDHKTGSWRTYWHTKRNGNLYPTHGLGPISQYMNINRGDRFDYLTSMSSPALGRTLYAKREFPADHERNQLKYINGDMSTSLIKTVKGRTIMVQHDTTTPRPYSRHNLIQGTNGVFAGFPNRIAVEHGGFGKSYHEWDMDMQKWYDKYDHPLWQRIGKEAEINGGHGGMDFVMLWRMVYCLRNGEALDQDVYDGAAWSVVNILSEQSLNNRSNSVNFPDFTRGAWKHATPLGIVGA.

Positions 1–31 (MHNIHRRHFLKAAGAVTAGLVTANIALNANA) form a signal peptide, tat-type signal. Residues 64 to 65 (ER), Asp-86, 135 to 138 (WEWH), 155 to 156 (EV), and Asn-184 each bind NAD(+). Residues Tyr-213, Arg-232, 244–247 (YPTH), and Tyr-326 contribute to the substrate site. An NAD(+)-binding site is contributed by Tyr-244.

Belongs to the Gfo/Idh/MocA family. Glycosyl hydrolase 109 subfamily. Requires NAD(+) as cofactor. Post-translationally, predicted to be exported by the Tat system. The position of the signal peptide cleavage has not been experimentally proven.

Glycosidase. The sequence is that of Glycosyl hydrolase family 109 protein 1 from Shewanella sp. (strain MR-4).